Here is a 337-residue protein sequence, read N- to C-terminus: RNA 3'-terminal phosphate cyclase (337 aa).

ATP-binding positions include Gln-101 and 282 to 285 (HMSD). The active-site Tele-AMP-histidine intermediate is His-306.

It belongs to the RNA 3'-terminal cyclase family. Type 1 subfamily.

It localises to the cytoplasm. It carries out the reaction a 3'-end 3'-phospho-ribonucleotide-RNA + ATP = a 3'-end 2',3'-cyclophospho-ribonucleotide-RNA + AMP + diphosphate. In terms of biological role, catalyzes the conversion of 3'-phosphate to a 2',3'-cyclic phosphodiester at the end of RNA. The mechanism of action of the enzyme occurs in 3 steps: (A) adenylation of the enzyme by ATP; (B) transfer of adenylate to an RNA-N3'P to produce RNA-N3'PP5'A; (C) and attack of the adjacent 2'-hydroxyl on the 3'-phosphorus in the diester linkage to produce the cyclic end product. The biological role of this enzyme is unknown but it is likely to function in some aspects of cellular RNA processing. The protein is RNA 3'-terminal phosphate cyclase of Saccharolobus islandicus (strain L.S.2.15 / Lassen #1) (Sulfolobus islandicus).